A 293-amino-acid chain; its full sequence is Protease HtpX (293 aa).

2 helical membrane-spanning segments follow: residues 4 to 24 and 32 to 52; these read IALF…VLSL and VTGL…VSLL. Residue H139 participates in Zn(2+) binding. Residue E140 is part of the active site. A Zn(2+)-binding site is contributed by H143. The next 2 helical transmembrane spans lie at 158 to 178 and 193 to 213; these read VVNT…AGFL and LIYF…ASII. E222 provides a ligand contact to Zn(2+).

The protein belongs to the peptidase M48B family. Zn(2+) is required as a cofactor.

It is found in the cell inner membrane. The sequence is that of Protease HtpX from Cronobacter sakazakii (strain ATCC BAA-894) (Enterobacter sakazakii).